Reading from the N-terminus, the 78-residue chain is Acyl carrier protein (78 aa).

The 76-residue stretch at 1–76 folds into the Carrier domain; the sequence is MALFEDIQAV…DVVKYIEDNK (76 aa). O-(pantetheine 4'-phosphoryl)serine is present on Ser-36.

Belongs to the acyl carrier protein (ACP) family. In terms of processing, 4'-phosphopantetheine is transferred from CoA to a specific serine of apo-ACP by AcpS. This modification is essential for activity because fatty acids are bound in thioester linkage to the sulfhydryl of the prosthetic group.

The protein resides in the cytoplasm. It participates in lipid metabolism; fatty acid biosynthesis. Functionally, carrier of the growing fatty acid chain in fatty acid biosynthesis. This Helicobacter pylori (strain Shi470) protein is Acyl carrier protein.